Consider the following 195-residue polypeptide: Orotate phosphoribosyltransferase (195 aa).

5-phospho-alpha-D-ribose 1-diphosphate is bound by residues Arg-87, Lys-91, and 112–120 (DDVATTGGS). The orotate site is built by Thr-116 and Arg-144.

The protein belongs to the purine/pyrimidine phosphoribosyltransferase family. PyrE subfamily. In terms of assembly, homodimer. Mg(2+) is required as a cofactor.

The enzyme catalyses orotidine 5'-phosphate + diphosphate = orotate + 5-phospho-alpha-D-ribose 1-diphosphate. It participates in pyrimidine metabolism; UMP biosynthesis via de novo pathway; UMP from orotate: step 1/2. Its function is as follows. Catalyzes the transfer of a ribosyl phosphate group from 5-phosphoribose 1-diphosphate to orotate, leading to the formation of orotidine monophosphate (OMP). This is Orotate phosphoribosyltransferase from Sulfurisphaera tokodaii (strain DSM 16993 / JCM 10545 / NBRC 100140 / 7) (Sulfolobus tokodaii).